The sequence spans 298 residues: Glycine--tRNA ligase alpha subunit (298 aa).

The protein belongs to the class-II aminoacyl-tRNA synthetase family. In terms of assembly, tetramer of two alpha and two beta subunits.

It is found in the cytoplasm. The catalysed reaction is tRNA(Gly) + glycine + ATP = glycyl-tRNA(Gly) + AMP + diphosphate. In Lacticaseibacillus paracasei (strain ATCC 334 / BCRC 17002 / CCUG 31169 / CIP 107868 / KCTC 3260 / NRRL B-441) (Lactobacillus paracasei), this protein is Glycine--tRNA ligase alpha subunit.